Consider the following 226-residue polypeptide: MKFFAYFAVIALSSASLINLFKRATANGCEVESCYKAHQTLINSCNGAFDFNCLCNLPQSYFQNLYDCSKSCDTLQESDIHSPSDIRSIYCEAASNSIYTFSIDSISLDMIGYSDFETDTEATTGSDTRTKAATGATTSAGTGVTKTSETGGVSSTANSEAKSGSVTTSKSGSTSISESKTTSGSSSSGKSSSSTSSASSQQTSSHAGGASGAFVSLLGLFAALLI.

The N-terminal stretch at 1 to 26 (MKFFAYFAVIALSSASLINLFKRATA) is a signal peptide. The disordered stretch occupies residues 119 to 209 (DTEATTGSDT…SQQTSSHAGG (91 aa)). The span at 131 to 148 (KAATGATTSAGTGVTKTS) shows a compositional bias: low complexity. The span at 149–160 (ETGGVSSTANSE) shows a compositional bias: polar residues. Over residues 161–208 (AKSGSVTTSKSGSTSISESKTTSGSSSSGKSSSSTSSASSQQTSSHAG) the composition is skewed to low complexity. Residue serine 197 is the site of GPI-anchor amidated serine attachment. A propeptide spans 198 to 226 (ASSQQTSSHAGGASGAFVSLLGLFAALLI) (removed in mature form).

Post-translationally, predicted to be a cleavage substrate for KEX2.

It is found in the cell membrane. Functionally, putative adhesin which is involved in cell adhesion and virulence. Plays a role in Candida-bacterial interactions and subsequent regulation of filamentation. The protein is Probable GPI-anchored adhesin-like protein PGA28 (PGA28) of Candida albicans (strain SC5314 / ATCC MYA-2876) (Yeast).